The sequence spans 536 residues: 2-isopropylmalate synthase (536 aa).

One can recognise a Pyruvate carboxyltransferase domain in the interval 8-273 (VLIFDTTLRD…FFGRDPESPT (266 aa)). Mn(2+)-binding residues include Asp-17, His-208, His-210, and Asn-244. The regulatory domain stretch occupies residues 408 to 536 (QLQLVQVSCG…PQHDLIKANL (129 aa)).

It belongs to the alpha-IPM synthase/homocitrate synthase family. LeuA type 1 subfamily. As to quaternary structure, homodimer. The cofactor is Mn(2+).

Its subcellular location is the cytoplasm. It carries out the reaction 3-methyl-2-oxobutanoate + acetyl-CoA + H2O = (2S)-2-isopropylmalate + CoA + H(+). It participates in amino-acid biosynthesis; L-leucine biosynthesis; L-leucine from 3-methyl-2-oxobutanoate: step 1/4. Functionally, catalyzes the condensation of the acetyl group of acetyl-CoA with 3-methyl-2-oxobutanoate (2-ketoisovalerate) to form 3-carboxy-3-hydroxy-4-methylpentanoate (2-isopropylmalate). This Prochlorococcus marinus (strain MIT 9211) protein is 2-isopropylmalate synthase.